The chain runs to 339 residues: Heat-inducible transcription repressor HrcA (339 aa).

This sequence belongs to the HrcA family.

Its function is as follows. Negative regulator of class I heat shock genes (grpE-dnaK-dnaJ and groELS operons). Prevents heat-shock induction of these operons. This Thermotoga neapolitana (strain ATCC 49049 / DSM 4359 / NBRC 107923 / NS-E) protein is Heat-inducible transcription repressor HrcA.